Consider the following 272-residue polypeptide: Phosphate import ATP-binding protein PstB (272 aa).

The region spanning leucine 26–isoleucine 267 is the ABC transporter domain. An ATP-binding site is contributed by glycine 58 to serine 65.

It belongs to the ABC transporter superfamily. Phosphate importer (TC 3.A.1.7) family. The complex is composed of two ATP-binding proteins (PstB), two transmembrane proteins (PstC and PstA) and a solute-binding protein (PstS).

The protein localises to the cell inner membrane. The enzyme catalyses phosphate(out) + ATP + H2O = ADP + 2 phosphate(in) + H(+). Its function is as follows. Part of the ABC transporter complex PstSACB involved in phosphate import. Responsible for energy coupling to the transport system. This Idiomarina loihiensis (strain ATCC BAA-735 / DSM 15497 / L2-TR) protein is Phosphate import ATP-binding protein PstB.